The sequence spans 394 residues: Elongation factor Tu-A (394 aa).

A tr-type G domain is found at 10-204 (KPHVNVGTIG…HLDTYIPEPQ (195 aa)). The tract at residues 19-26 (GHVDHGKT) is G1. 19–26 (GHVDHGKT) contributes to the GTP binding site. Residue Thr26 participates in Mg(2+) binding. A G2 region spans residues 60–64 (GITIN). Residues 81 to 84 (DCPG) form a G3 region. GTP-binding positions include 81 to 85 (DCPGH) and 136 to 139 (NKCD). A G4 region spans residues 136 to 139 (NKCD). Residues 174–176 (SAL) are G5.

This sequence belongs to the TRAFAC class translation factor GTPase superfamily. Classic translation factor GTPase family. EF-Tu/EF-1A subfamily. Monomer.

It is found in the cytoplasm. The enzyme catalyses GTP + H2O = GDP + phosphate + H(+). GTP hydrolase that promotes the GTP-dependent binding of aminoacyl-tRNA to the A-site of ribosomes during protein biosynthesis. This is Elongation factor Tu-A from Pasteurella multocida (strain Pm70).